Consider the following 244-residue polypeptide: Phosphoadenosine 5'-phosphosulfate reductase (244 aa).

C239 acts as the Nucleophile; cysteine thiosulfonate intermediate in catalysis.

Belongs to the PAPS reductase family. CysH subfamily.

It localises to the cytoplasm. It carries out the reaction [thioredoxin]-disulfide + sulfite + adenosine 3',5'-bisphosphate + 2 H(+) = [thioredoxin]-dithiol + 3'-phosphoadenylyl sulfate. It functions in the pathway sulfur metabolism; hydrogen sulfide biosynthesis; sulfite from sulfate: step 3/3. In terms of biological role, catalyzes the formation of sulfite from phosphoadenosine 5'-phosphosulfate (PAPS) using thioredoxin as an electron donor. This is Phosphoadenosine 5'-phosphosulfate reductase from Shigella boydii serotype 4 (strain Sb227).